Consider the following 128-residue polypeptide: MASLDIHLYVKKDLTYGECVRVAKEKYKIIHRLLYISIIFLFLNYVVDIVCYVKNYNGFSFFCWVFLNLGVIGIIITVIIYYISIPKPDAESEFLNKPDSLNQNVGESQSNEPPKYTSTFMDELDKQD.

Transmembrane regions (helical) follow at residues 33–53 (LLYI…VCYV) and 61–81 (FFCW…VIIY). Residues 99 to 120 (DSLNQNVGESQSNEPPKYTSTF) show a composition bias toward polar residues. A disordered region spans residues 99–128 (DSLNQNVGESQSNEPPKYTSTFMDELDKQD).

It localises to the membrane. This is an uncharacterized protein from Schizosaccharomyces pombe (strain 972 / ATCC 24843) (Fission yeast).